The following is a 274-amino-acid chain: Caldesmon, smooth muscle (274 aa).

2 disordered regions span residues 1–102 (SNLK…FSPK) and 179–274 (KGNV…EKEP). 2 stretches are compositionally biased toward basic and acidic residues: residues 12–21 (GSEKLKEKQQ) and 28–95 (DELK…EKKP). Polar residues predominate over residues 182–194 (VFSSPGGTGTPNK). Composition is skewed to basic and acidic residues over residues 226 to 245 (SDLR…KQSV) and 260 to 274 (KKSE…EKEP).

The protein resides in the cytoplasm. It is found in the cytoskeleton. It localises to the myofibril. The protein localises to the stress fiber. In terms of biological role, control of actomyosin interactions in smooth muscle and nonmuscle cells (could act as a bridge between myosin and actin filaments). Inhibits the actin-activated ATPase of myosin this inhibition is attenuated by calcium-calmodulin and is potentiated by tropomyosin. Interacts with actin, myosin, 2 molecules of tropomyosin and with calmodulin. The polypeptide is Caldesmon, smooth muscle (CALD1) (Meleagris gallopavo (Wild turkey)).